Reading from the N-terminus, the 368-residue chain is Transmembrane protein 26 (368 aa).

3 helical membrane passes run 4–24 (LVFL…LVGV), 36–56 (YWLL…TLKF), and 65–85 (FSPA…LLEL). Asn110 carries N-linked (GlcNAc...) asparagine glycosylation. The next 5 helical transmembrane spans lie at 150-170 (QTFL…GGIT), 177-197 (LLLM…ETLE), 208-228 (VYAI…DLAV), 257-277 (IGIS…ILMT), and 281-301 (VINQ…VLQL). Positions 324 to 368 (GEHGCRAQTSESGPSQRDWQNESKEGLAIPLRGSPVTSDDSHHTP) are disordered. The segment covering 330-341 (AQTSESGPSQRD) has biased composition (polar residues).

It localises to the membrane. This chain is Transmembrane protein 26 (TMEM26), found in Homo sapiens (Human).